Consider the following 311-residue polypeptide: GTP cyclohydrolase MptA (311 aa).

The protein belongs to the GTP cyclohydrolase IV family. Homodimer. The cofactor is Fe(2+).

The catalysed reaction is GTP + H2O = 7,8-dihydroneopterin 2',3'-cyclic phosphate + formate + diphosphate + H(+). It functions in the pathway cofactor biosynthesis; 5,6,7,8-tetrahydromethanopterin biosynthesis. Its function is as follows. Converts GTP to 7,8-dihydro-D-neopterin 2',3'-cyclic phosphate, the first intermediate in the biosynthesis of coenzyme methanopterin. This is GTP cyclohydrolase MptA from Halobacterium salinarum (strain ATCC 29341 / DSM 671 / R1).